Here is a 212-residue protein sequence, read N- to C-terminus: B3 domain-containing protein Os04g0386900 (212 aa).

A disordered region spans residues 1-78 (MRAATALPSI…PRPPEPEPEK (78 aa)). Composition is skewed to low complexity over residues 8 to 23 (PSIP…ASDP) and 36 to 46 (DAGAEDPAAVD). The TF-B3 DNA-binding region spans 93 to 191 (FTCIMCKSHV…EFRVQVLRAE (99 aa)).

It is found in the nucleus. This Oryza sativa subsp. japonica (Rice) protein is B3 domain-containing protein Os04g0386900.